The primary structure comprises 48 residues: Cytochrome c oxidase subunit 2 (48 aa).

Topologically, residues 1 to 14 (MAHPAQLGLQDASS) are mitochondrial intermembrane. A helical membrane pass occupies residues 15–45 (PIXEELLHFHEDALMIVFLISTLVLYIITTT). Topologically, residues 46–48 (VST) are mitochondrial matrix.

Belongs to the cytochrome c oxidase subunit 2 family. Component of the cytochrome c oxidase (complex IV, CIV), a multisubunit enzyme composed of 14 subunits. The complex is composed of a catalytic core of 3 subunits MT-CO1, MT-CO2 and MT-CO3, encoded in the mitochondrial DNA, and 11 supernumerary subunits COX4I, COX5A, COX5B, COX6A, COX6B, COX6C, COX7A, COX7B, COX7C, COX8 and NDUFA4, which are encoded in the nuclear genome. The complex exists as a monomer or a dimer and forms supercomplexes (SCs) in the inner mitochondrial membrane with NADH-ubiquinone oxidoreductase (complex I, CI) and ubiquinol-cytochrome c oxidoreductase (cytochrome b-c1 complex, complex III, CIII), resulting in different assemblies (supercomplex SCI(1)III(2)IV(1) and megacomplex MCI(2)III(2)IV(2)). Found in a complex with TMEM177, COA6, COX18, COX20, SCO1 and SCO2. Interacts with TMEM177 in a COX20-dependent manner. Interacts with COX20. Interacts with COX16. Requires Cu cation as cofactor.

The protein localises to the mitochondrion inner membrane. The enzyme catalyses 4 Fe(II)-[cytochrome c] + O2 + 8 H(+)(in) = 4 Fe(III)-[cytochrome c] + 2 H2O + 4 H(+)(out). Its function is as follows. Component of the cytochrome c oxidase, the last enzyme in the mitochondrial electron transport chain which drives oxidative phosphorylation. The respiratory chain contains 3 multisubunit complexes succinate dehydrogenase (complex II, CII), ubiquinol-cytochrome c oxidoreductase (cytochrome b-c1 complex, complex III, CIII) and cytochrome c oxidase (complex IV, CIV), that cooperate to transfer electrons derived from NADH and succinate to molecular oxygen, creating an electrochemical gradient over the inner membrane that drives transmembrane transport and the ATP synthase. Cytochrome c oxidase is the component of the respiratory chain that catalyzes the reduction of oxygen to water. Electrons originating from reduced cytochrome c in the intermembrane space (IMS) are transferred via the dinuclear copper A center (CU(A)) of subunit 2 and heme A of subunit 1 to the active site in subunit 1, a binuclear center (BNC) formed by heme A3 and copper B (CU(B)). The BNC reduces molecular oxygen to 2 water molecules using 4 electrons from cytochrome c in the IMS and 4 protons from the mitochondrial matrix. The protein is Cytochrome c oxidase subunit 2 (mt-co2) of Polypterus sp. (Bichir).